Here is a 120-residue protein sequence, read N- to C-terminus: Glutamate--tRNA ligase (120 aa).

This sequence belongs to the class-I aminoacyl-tRNA synthetase family. Glutamate--tRNA ligase type 1 subfamily. In terms of assembly, monomer.

The protein resides in the cytoplasm. It catalyses the reaction tRNA(Glu) + L-glutamate + ATP = L-glutamyl-tRNA(Glu) + AMP + diphosphate. Catalyzes the attachment of glutamate to tRNA(Glu) in a two-step reaction: glutamate is first activated by ATP to form Glu-AMP and then transferred to the acceptor end of tRNA(Glu). This is Glutamate--tRNA ligase (gltX) from Staphylococcus xylosus.